The chain runs to 431 residues: Adenylosuccinate synthetase (431 aa).

GTP contacts are provided by residues 13 to 19 (GDEGKGK) and 41 to 43 (GHT). Aspartate 14 serves as the catalytic Proton acceptor. The Mg(2+) site is built by aspartate 14 and glycine 41. Residues 14–17 (DEGK), 39–42 (NAGH), threonine 130, arginine 144, glutamine 225, threonine 240, and arginine 304 contribute to the IMP site. The active-site Proton donor is the histidine 42. 300-306 (ATTGRKR) provides a ligand contact to substrate. Residues arginine 306, 332 to 334 (KLD), and 415 to 417 (STG) contribute to the GTP site.

It belongs to the adenylosuccinate synthetase family. In terms of assembly, homodimer. Mg(2+) is required as a cofactor.

The protein localises to the cytoplasm. The catalysed reaction is IMP + L-aspartate + GTP = N(6)-(1,2-dicarboxyethyl)-AMP + GDP + phosphate + 2 H(+). It participates in purine metabolism; AMP biosynthesis via de novo pathway; AMP from IMP: step 1/2. In terms of biological role, plays an important role in the de novo pathway of purine nucleotide biosynthesis. Catalyzes the first committed step in the biosynthesis of AMP from IMP. This chain is Adenylosuccinate synthetase, found in Shewanella frigidimarina (strain NCIMB 400).